Here is a 416-residue protein sequence, read N- to C-terminus: Glutamate dehydrogenase A2 (416 aa).

Lys-105 is a catalytic residue.

This sequence belongs to the Glu/Leu/Phe/Val dehydrogenases family. As to quaternary structure, homohexamer.

The polypeptide is Glutamate dehydrogenase A2 (gdhA2) (Halobacterium salinarum (strain ATCC 700922 / JCM 11081 / NRC-1) (Halobacterium halobium)).